Here is a 198-residue protein sequence, read N- to C-terminus: Pyridoxal 5'-phosphate synthase subunit PdxT (198 aa).

52-54 (GES) is an L-glutamine binding site. The active-site Nucleophile is the Cys-84. L-glutamine contacts are provided by residues Arg-116 and 143–144 (IR). Active-site charge relay system residues include His-179 and Glu-181.

This sequence belongs to the glutaminase PdxT/SNO family. As to quaternary structure, in the presence of PdxS, forms a dodecamer of heterodimers. Only shows activity in the heterodimer.

It carries out the reaction aldehydo-D-ribose 5-phosphate + D-glyceraldehyde 3-phosphate + L-glutamine = pyridoxal 5'-phosphate + L-glutamate + phosphate + 3 H2O + H(+). The enzyme catalyses L-glutamine + H2O = L-glutamate + NH4(+). It participates in cofactor biosynthesis; pyridoxal 5'-phosphate biosynthesis. In terms of biological role, catalyzes the hydrolysis of glutamine to glutamate and ammonia as part of the biosynthesis of pyridoxal 5'-phosphate. The resulting ammonia molecule is channeled to the active site of PdxS. This is Pyridoxal 5'-phosphate synthase subunit PdxT from Caldivirga maquilingensis (strain ATCC 700844 / DSM 13496 / JCM 10307 / IC-167).